The sequence spans 496 residues: Transactivator/viroplasmin protein (496 aa).

A disordered region spans residues 102–128; the sequence is RPNQGIQIPKKNEDHSSSSSKEEKGIQ. Basic and acidic residues predominate over residues 111-128; the sequence is KKNEDHSSSSSKEEKGIQ.

This sequence belongs to the caulimoviridae viroplasmin family.

Its subcellular location is the host cytoplasm. Functionally, enhances the translation of downstream ORFs on polycistronic mRNAs derived from carnation etched ring virus. The sequence is that of Transactivator/viroplasmin protein from Dianthus caryophyllus (Carnation).